Here is a 916-residue protein sequence, read N- to C-terminus: MKGGGFYQNQYLVPNVYFGNSSPVIAPIGGNALNNNNNNNNNNNNNGNNNNGININISNFQHQQHQIHQQHFGGLSPNMNQNHIIQHISHHQHQQAQQIQIIQNNNQPQPQQHQIQHQQQQQQQIQQQIQQQQIQQQQIQQQQIQQQQQQQIQQQQQQSKMNFIRGHHQRNSSFDEFSLSDVSVGSFKDMGWEEIYFCYHHFTQMDEGKGYLKSFQQLIRYITGLYPDISPSPNSQFLFSLGLLYPNALPQVQSPNMILSLTLKQMIETYSYTKSMVYSGSGSGGGNSGSGGGNSGSGGSSGNGTSGSGGSNNGSTIIINNTNLNNINNNNNTNNNNTNNINIPSTPPILRSLANGASSTNINIRKFSPQQACHIIDVFNSVKDNKTGGVSTLKLSLFGADASLLPLTTLPFHEFVQYIGLNIIPFENLFKPPPPPSSQLQSSPPIESQHLFLSEIDELTNNNQNNQNNNQQQQQYQQQQHHQQQQQQYQQQPQPQPQPQHQPFIYFEDTSNNNSPLDGNFNNSFGLFNNNNVVNHSPLGNNILNNIQQFNNQNNNQNNNNNNNNNNNNNNNNNNNNNNNNNNNNNNNNNHNNNNHNNNNNNNNQNNIFNHNQNQNNHLINNHSPNQYNNQGNILKNSGSVVEPPSQQQQYFSDIEISFSELKISSKLGEGTFGVVYKGLWRGSSVAIKQIKINEDVNNQVLEEFRKELTILSRLRHPNIVLLMAACTAPPNLCFITEYLPGGSLYDALHSKKIKMNMQLYKKLAIQIAQGMNYLHLSGVIHRDIKSLNLLLDEHMNVKICDFGLSKLKSKSTEMTKSIGSPIWMSPELLMGEDYTEKVDVYAFGIILWELGTGELPYSGLDSVQLALAVTTKSLRPPIPNAWPYQLSHLIQACWHQDPLKRPSFTEILNLLNEIP.

3 disordered regions span residues 283-311 (SGGG…SGGS), 461-518 (NNNQ…SPLD), and 550-646 (FNNQ…EPPS). 2 stretches are compositionally biased toward low complexity: residues 461 to 493 (NNNQ…QQQP) and 550 to 622 (FNNQ…LINN). Residues 623–646 (HSPNQYNNQGNILKNSGSVVEPPS) show a composition bias toward polar residues. In terms of domain architecture, Protein kinase spans 662–916 (LKISSKLGEG…EILNLLNEIP (255 aa)). Residues 668-676 (LGEGTFGVV) and lysine 689 contribute to the ATP site. The Proton acceptor role is filled by aspartate 784.

The protein belongs to the protein kinase superfamily. TKL Ser/Thr protein kinase family.

It carries out the reaction L-seryl-[protein] + ATP = O-phospho-L-seryl-[protein] + ADP + H(+). The catalysed reaction is L-threonyl-[protein] + ATP = O-phospho-L-threonyl-[protein] + ADP + H(+). The sequence is that of Probable serine/threonine-protein kinase DDB_G0267514 from Dictyostelium discoideum (Social amoeba).